The chain runs to 239 residues: Retrotransposon Gag-like protein 6 (239 aa).

Positions 29 to 69 (LTSLRLTNSALRREASTLRAEKANLTNMLESVMAELTLLRT) form a coiled coil. Positions 82 to 94 (PISSITSNGTRPM) are enriched in polar residues. Disordered stretches follow at residues 82–106 (PISSITSNGTRPMTTPPTSLPEPFS) and 214–239 (TGPCPVHPASNGTSPAPALPARARNL). A compositionally biased stretch (low complexity) spans 228-239 (PAPALPARARNL).

Belongs to the LDOC1 family.

This is Retrotransposon Gag-like protein 6 from Homo sapiens (Human).